The sequence spans 2083 residues: Non-reducing polyketide synthase curS2 (2083 aa).

Residues leucine 9–histidine 246 form an N-terminal acylcarrier protein transacylase domain (SAT) region. The Ketosynthase family 3 (KS3) domain maps to arginine 366–aspartate 798. Catalysis depends on for beta-ketoacyl synthase activity residues cysteine 543, histidine 678, and histidine 717. The malonyl-CoA:ACP transacylase (MAT) domain stretch occupies residues valine 895–asparagine 1201. The For acyl/malonyl transferase activity role is filled by serine 986. The tract at residues alanine 1276 to aspartate 1415 is N-terminal hotdog fold. The PKS/mFAS DH domain maps to alanine 1276–lysine 1585. Residues serine 1285–arginine 1581 are product template (PT) domain. The C-terminal hotdog fold stretch occupies residues glycine 1437 to lysine 1585. In terms of domain architecture, Carrier spans aspartate 1637–lysine 1714. Residue serine 1674 is modified to O-(pantetheine 4'-phosphoryl)serine. Residues phenylalanine 1710–alanine 1790 form a disordered region. A compositionally biased stretch (low complexity) spans serine 1718–serine 1736. The segment covering methionine 1745 to serine 1754 has biased composition (polar residues). A compositionally biased stretch (basic and acidic residues) spans leucine 1771–glutamate 1784. A thioesterase (TE) domain region spans residues methionine 1811 to leucine 2058. Histidine 2065 (for thioesterase activity) is an active-site residue.

It participates in mycotoxin biosynthesis. Non-reducing polyketide synthase; part of the gene cluster that mediates the biosynthesis of 10,11-dehydrocurvularin, a prevalent fungal phytotoxin with heat shock response and immune-modulatory activities. The highly reducing polyketide synthase curS1 is responsible for biosynthesis up to the tetraketide stage. The non-reducing polyketide synthase curS2 then conducts four additional chain extension cycles, producing the unreduced part of the nascent octaketide from C-1 to C-8 in 10,11-dehydrocurvularin. The chain is Non-reducing polyketide synthase curS2 from Aspergillus terreus.